A 343-amino-acid chain; its full sequence is 3-dehydroquinate synthase (343 aa).

NAD(+)-binding positions include 61–66, 95–96, 119–120, K132, K141, N142, and 159–162; these read SGEKYK, GV, TT, and FLKT. The Zn(2+) site is built by E174, H231, and H248.

It belongs to the sugar phosphate cyclases superfamily. Dehydroquinate synthase family. As to quaternary structure, homodimer. NAD(+) is required as a cofactor. The cofactor is Co(2+). Zn(2+) serves as cofactor.

The protein localises to the cytoplasm. The catalysed reaction is 7-phospho-2-dehydro-3-deoxy-D-arabino-heptonate = 3-dehydroquinate + phosphate. Its pathway is metabolic intermediate biosynthesis; chorismate biosynthesis; chorismate from D-erythrose 4-phosphate and phosphoenolpyruvate: step 2/7. Functionally, catalyzes the conversion of 3-deoxy-D-arabino-heptulosonate 7-phosphate (DAHP) to dehydroquinate (DHQ). The chain is 3-dehydroquinate synthase from Helicobacter pylori (strain ATCC 700392 / 26695) (Campylobacter pylori).